We begin with the raw amino-acid sequence, 163 residues long: CASP-like protein 1C2 (163 aa).

The Cytoplasmic portion of the chain corresponds to 1-6 (MAKSNK). A helical transmembrane segment spans residues 7-27 (IFTNTLRLLALAATVVAIVFM). Residues 28–52 (VTSHDSAQVLNLTFTAKYSNTPAFK) lie on the Extracellular side of the membrane. A glycan (N-linked (GlcNAc...) asparagine) is linked at Asn38. A helical membrane pass occupies residues 53 to 73 (FLVIGEAIAGGYTVISILLSF). The Cytoplasmic segment spans residues 74 to 79 (KGLFWR). The helical transmembrane segment at 80–100 (LIVILDMVTTVLLTSSISAAL) threads the bilayer. Residues 101-128 (AIAQVGKKGNTHAGWLPICGQVPDFCDY) lie on the Extracellular side of the membrane. A helical transmembrane segment spans residues 129–149 (VTIALIAGFAAAIIYFVLLLC). Topologically, residues 150–163 (SLYVVLSPIFVATP) are cytoplasmic.

It belongs to the Casparian strip membrane proteins (CASP) family. Homodimer and heterodimers.

The protein localises to the cell membrane. This Populus trichocarpa (Western balsam poplar) protein is CASP-like protein 1C2.